The sequence spans 492 residues: Stromelysin-3 (492 aa).

The first 35 residues, 1–35 (MARAACLLRAISRVLLLPLPLLLLLLLLLPSPLMA), serve as a signal peptide directing secretion. The propeptide at 36-101 (RARPPESHRH…VLNARNRQKR (66 aa)) is activation peptide. The Cysteine switch motif lies at 82–89 (LRCGVPDL). Zn(2+) is bound by residues C84, H168, and D170. Positions 175, 176, 178, and 180 each coordinate Ca(2+). Zn(2+) contacts are provided by H183, H196, and H219. Residue E220 is part of the active site. Residues H223 and H229 each contribute to the Zn(2+) site. Hemopexin repeat units lie at residues 295 to 343 (PDVC…WQGL), 344 to 386 (PSPV…KLGL), 388 to 436 (GSPV…WRGV), and 437 to 484 (PSEI…FFDC). An intrachain disulfide couples C298 to C484.

The protein belongs to the peptidase M10A family. Requires Ca(2+) as cofactor. Zn(2+) is required as a cofactor. The precursor is cleaved by a furin endopeptidase. As to expression, specifically expressed in the mammary gland during apoptosis.

The protein localises to the secreted. Its subcellular location is the extracellular space. It localises to the extracellular matrix. In terms of biological role, may play an important role in the progression of epithelial malignancies. The sequence is that of Stromelysin-3 (Mmp11) from Mus musculus (Mouse).